Here is a 345-residue protein sequence, read N- to C-terminus: L-threonine 3-dehydrogenase (345 aa).

Residue Cys38 coordinates Zn(2+). Residues Thr40 and His43 each act as charge relay system in the active site. Zn(2+) is bound by residues His63, Glu64, Cys93, Cys96, Cys99, and Cys107. NAD(+) contacts are provided by residues Ile176, Asp196, Arg201, 263 to 265 (LGT), and 287 to 288 (VT).

This sequence belongs to the zinc-containing alcohol dehydrogenase family. As to quaternary structure, homotetramer. It depends on Zn(2+) as a cofactor.

The protein resides in the cytoplasm. It carries out the reaction L-threonine + NAD(+) = (2S)-2-amino-3-oxobutanoate + NADH + H(+). It functions in the pathway amino-acid degradation; L-threonine degradation via oxydo-reductase pathway; glycine from L-threonine: step 1/2. Functionally, catalyzes the NAD(+)-dependent oxidation of L-threonine to 2-amino-3-ketobutyrate. This Cutibacterium acnes (strain DSM 16379 / KPA171202) (Propionibacterium acnes) protein is L-threonine 3-dehydrogenase.